The primary structure comprises 563 residues: Ataxin-10 homolog (563 aa).

A Phosphothreonine modification is found at Thr433. Residues 544 to 563 (VSKEEDPGNENSEIISIDED) form a disordered region. The residue at position 559 (Ser559) is a Phosphoserine.

The protein belongs to the ataxin-10 family.

Its subcellular location is the cytoplasm. May play a role in the regulation of cytokinesis. This Saccharomyces cerevisiae (strain ATCC 204508 / S288c) (Baker's yeast) protein is Ataxin-10 homolog (CTR86).